Reading from the N-terminus, the 202-residue chain is Large ribosomal subunit protein uL4 (202 aa).

Polar residues predominate over residues 42-52; it reads GTKAQKSRSQV. Residues 42–70 are disordered; the sequence is GTKAQKSRSQVSGTTKKSKKQKGGGARHG.

The protein belongs to the universal ribosomal protein uL4 family. As to quaternary structure, part of the 50S ribosomal subunit.

Functionally, one of the primary rRNA binding proteins, this protein initially binds near the 5'-end of the 23S rRNA. It is important during the early stages of 50S assembly. It makes multiple contacts with different domains of the 23S rRNA in the assembled 50S subunit and ribosome. In terms of biological role, forms part of the polypeptide exit tunnel. This Xylella fastidiosa (strain Temecula1 / ATCC 700964) protein is Large ribosomal subunit protein uL4.